A 248-amino-acid chain; its full sequence is MHLYALSEKLEFPDPQTASSEGLLAIGGDLSVARLVTAYANGIFPWYDDDTPILWWSPDPRCVLYPSQLHVPASLRRRINSGQFEVTLDTAFEAVIHACADAARPGQSGTWIVDEMIDAYMNLHEAGVAHSVEVWSRGAGDGRVLAGGLYGVALGGVFYGESMFYRRTDASKVAVVWLVRLLEFWGYRVVDCQQTTTHMLRFGAQEVSRACFLEELDRALRMPLRAGRWQIPDGFRPLRRATLPDENQ.

The protein belongs to the L/F-transferase family.

The protein resides in the cytoplasm. It catalyses the reaction N-terminal L-lysyl-[protein] + L-leucyl-tRNA(Leu) = N-terminal L-leucyl-L-lysyl-[protein] + tRNA(Leu) + H(+). It carries out the reaction N-terminal L-arginyl-[protein] + L-leucyl-tRNA(Leu) = N-terminal L-leucyl-L-arginyl-[protein] + tRNA(Leu) + H(+). The catalysed reaction is L-phenylalanyl-tRNA(Phe) + an N-terminal L-alpha-aminoacyl-[protein] = an N-terminal L-phenylalanyl-L-alpha-aminoacyl-[protein] + tRNA(Phe). Functions in the N-end rule pathway of protein degradation where it conjugates Leu, Phe and, less efficiently, Met from aminoacyl-tRNAs to the N-termini of proteins containing an N-terminal arginine or lysine. The polypeptide is Leucyl/phenylalanyl-tRNA--protein transferase (Oleidesulfovibrio alaskensis (strain ATCC BAA-1058 / DSM 17464 / G20) (Desulfovibrio alaskensis)).